The following is a 442-amino-acid chain: ATP-dependent RNA helicase SUB2-2 (442 aa).

Positions 58–86 match the Q motif motif; that stretch reads TGFKDFLLKPELARAIIDCGFEHPSEVQQ. The Helicase ATP-binding domain occupies 89-264; sequence IPQSIHGTDV…RRFLQNPLEI (176 aa). 102–109 provides a ligand contact to ATP; that stretch reads AKSGLGKT. A DECD box motif is present at residues 211-214; the sequence is DECD. The Helicase C-terminal domain occupies 292–437; it reads KLAQLLDDLE…EFPEEGIDPS (146 aa).

The protein belongs to the DEAD box helicase family. DECD subfamily.

It localises to the nucleus. It carries out the reaction ATP + H2O = ADP + phosphate + H(+). Functionally, ATP-binding RNA helicase involved in transcription elongation and required for the export of mRNA out of the nucleus. SUB2 also plays a role in pre-mRNA splicing and spliceosome assembly. May be involved in rDNA and telomeric silencing, and maintenance of genome integrity. The chain is ATP-dependent RNA helicase SUB2-2 (SUB2-2) from Vanderwaltozyma polyspora (strain ATCC 22028 / DSM 70294 / BCRC 21397 / CBS 2163 / NBRC 10782 / NRRL Y-8283 / UCD 57-17) (Kluyveromyces polysporus).